Here is a 104-residue protein sequence, read N- to C-terminus: Phosphoribosyl-ATP pyrophosphatase (104 aa).

The protein belongs to the PRA-PH family.

Its subcellular location is the cytoplasm. It carries out the reaction 1-(5-phospho-beta-D-ribosyl)-ATP + H2O = 1-(5-phospho-beta-D-ribosyl)-5'-AMP + diphosphate + H(+). It participates in amino-acid biosynthesis; L-histidine biosynthesis; L-histidine from 5-phospho-alpha-D-ribose 1-diphosphate: step 2/9. The chain is Phosphoribosyl-ATP pyrophosphatase from Methanocorpusculum labreanum (strain ATCC 43576 / DSM 4855 / Z).